The chain runs to 336 residues: Fructose-1,6-bisphosphatase class 1 (336 aa).

Mg(2+) is bound by residues Glu92, Asp115, Leu117, and Asp118. Substrate contacts are provided by residues 118–121 (DGSS), Asn211, Tyr244, 262–264 (YLY), and Lys274. Glu280 contributes to the Mg(2+) binding site.

This sequence belongs to the FBPase class 1 family. As to quaternary structure, homotetramer. The cofactor is Mg(2+).

It is found in the cytoplasm. It carries out the reaction beta-D-fructose 1,6-bisphosphate + H2O = beta-D-fructose 6-phosphate + phosphate. Its pathway is carbohydrate biosynthesis; gluconeogenesis. This is Fructose-1,6-bisphosphatase class 1 from Aliivibrio fischeri (strain MJ11) (Vibrio fischeri).